The chain runs to 188 residues: Mediator of RNA polymerase II transcription subunit 29 (188 aa).

Composition is skewed to low complexity over residues 1-23 (MNPN…QSSP) and 30-43 (VQHQ…PLQQ). Residues 1–43 (MNPNMNMMPMSGPQMMQVMQSSPSGPPGPVQHQQQQPPQPLQQ) are disordered.

It belongs to the Mediator complex subunit 29 family. In terms of assembly, component of the Mediator complex. Self-associates. Interacts with dsx.

It localises to the nucleus. In terms of biological role, component of the Mediator complex, a coactivator involved in the regulated transcription of nearly all RNA polymerase II-dependent genes. Mediator functions as a bridge to convey information from gene-specific regulatory proteins to the basal RNA polymerase II transcription machinery. Mediator is recruited to promoters by direct interactions with regulatory proteins and serves as a scaffold for the assembly of a functional preinitiation complex with RNA polymerase II and the general transcription factors. Required for female somatic sexual development. The chain is Mediator of RNA polymerase II transcription subunit 29 (ix) from Drosophila melanogaster (Fruit fly).